The primary structure comprises 296 residues: NAD kinase (296 aa).

The active-site Proton acceptor is aspartate 74. Residues 74-75 (DG), 148-149 (ND), arginine 176, aspartate 178, and 189-194 (TAYALS) contribute to the NAD(+) site.

The protein belongs to the NAD kinase family. Requires a divalent metal cation as cofactor.

The protein localises to the cytoplasm. It carries out the reaction NAD(+) + ATP = ADP + NADP(+) + H(+). Functionally, involved in the regulation of the intracellular balance of NAD and NADP, and is a key enzyme in the biosynthesis of NADP. Catalyzes specifically the phosphorylation on 2'-hydroxyl of the adenosine moiety of NAD to yield NADP. This Nitrosomonas europaea (strain ATCC 19718 / CIP 103999 / KCTC 2705 / NBRC 14298) protein is NAD kinase.